The chain runs to 159 residues: Large ribosomal subunit protein uL22 (159 aa).

It belongs to the universal ribosomal protein uL22 family. Part of the 50S ribosomal subunit.

Its function is as follows. This protein binds specifically to 23S rRNA; its binding is stimulated by other ribosomal proteins, e.g. L4, L17, and L20. It is important during the early stages of 50S assembly. It makes multiple contacts with different domains of the 23S rRNA in the assembled 50S subunit and ribosome. In terms of biological role, the globular domain of the protein is located near the polypeptide exit tunnel on the outside of the subunit, while an extended beta-hairpin is found that lines the wall of the exit tunnel in the center of the 70S ribosome. The protein is Large ribosomal subunit protein uL22 of Thermotoga sp. (strain RQ2).